Reading from the N-terminus, the 36-residue chain is ECVPENGHCRDWYDECCEGFYCSCRQPPKCICRNNN.

4 disulfides stabilise this stretch: Cys-2-Cys-17, Cys-9-Cys-22, Cys-16-Cys-32, and Cys-24-Cys-30. Asn-36 is modified (asparagine amide).

Belongs to the neurotoxin 07 (Beta/delta-agtx) family. 04 (aga-5) subfamily. As to expression, expressed by the venom gland.

The protein localises to the secreted. Insecticidal neurotoxin that induces an irreversible spastic paralysis when injected into insects. Modifies presynaptic voltage-gated sodium channels (Nav), causing them to open at the normal resting potential of the nerve. This leads to spontaneous release of neurotransmitter and repetitive action potentials in motor neurons. This Agelenopsis aperta (North American funnel-web spider) protein is Mu-agatoxin-Aa1a.